The primary structure comprises 115 residues: Large ribosomal subunit protein bL19 (115 aa).

It belongs to the bacterial ribosomal protein bL19 family.

In terms of biological role, this protein is located at the 30S-50S ribosomal subunit interface and may play a role in the structure and function of the aminoacyl-tRNA binding site. The protein is Large ribosomal subunit protein bL19 of Aeromonas hydrophila subsp. hydrophila (strain ATCC 7966 / DSM 30187 / BCRC 13018 / CCUG 14551 / JCM 1027 / KCTC 2358 / NCIMB 9240 / NCTC 8049).